A 415-amino-acid chain; its full sequence is Serine--tRNA ligase (415 aa).

An L-serine-binding site is contributed by 230-232 (TAE). 261–263 (RKE) provides a ligand contact to ATP. Glutamate 284 is a binding site for L-serine. An ATP-binding site is contributed by 348-351 (EISS). Serine 382 is a binding site for L-serine.

The protein belongs to the class-II aminoacyl-tRNA synthetase family. Type-1 seryl-tRNA synthetase subfamily. As to quaternary structure, homodimer. The tRNA molecule binds across the dimer.

It is found in the cytoplasm. The enzyme catalyses tRNA(Ser) + L-serine + ATP = L-seryl-tRNA(Ser) + AMP + diphosphate + H(+). The catalysed reaction is tRNA(Sec) + L-serine + ATP = L-seryl-tRNA(Sec) + AMP + diphosphate + H(+). It participates in aminoacyl-tRNA biosynthesis; selenocysteinyl-tRNA(Sec) biosynthesis; L-seryl-tRNA(Sec) from L-serine and tRNA(Sec): step 1/1. Functionally, catalyzes the attachment of serine to tRNA(Ser). Is also able to aminoacylate tRNA(Sec) with serine, to form the misacylated tRNA L-seryl-tRNA(Sec), which will be further converted into selenocysteinyl-tRNA(Sec). The polypeptide is Serine--tRNA ligase (Sulfurimonas denitrificans (strain ATCC 33889 / DSM 1251) (Thiomicrospira denitrificans (strain ATCC 33889 / DSM 1251))).